The following is a 782-amino-acid chain: General transcription and DNA repair factor IIH helicase/translocase subunit XPB (782 aa).

The segment covering 1–11 has biased composition (basic and acidic residues); the sequence is MGKRDRADRDK. 2 disordered regions span residues 1–51 and 220–240; these read MGKR…ESGT and ISKTAEGSGGPSTSRVTDPQG. The short motif at 6-18 is the Nuclear localization signal element; the sequence is RADRDKKKSRKRH. Residues 21–30 are compositionally biased toward acidic residues; it reads DEEDDEEDAP. In terms of domain architecture, Helicase ATP-binding spans 327-488; it reads MFGNGRARSG…DLNFLIGPKL (162 aa). 340–347 lines the ATP pocket; the sequence is LPCGAGKS. The short motif at 441 to 444 is the DEVH box element; sequence DEVH. A Helicase C-terminal domain is found at 542 to 702; that stretch reads RACQFLIKFH…LAGMEEEDLA (161 aa). The residue at position 686 (Ser686) is a Phosphoserine. Position 751 is a phosphoserine; by CK2 (Ser751).

This sequence belongs to the helicase family. RAD25/XPB subfamily. Component of the 7-subunit TFIIH core complex composed of XPB/ERCC3, XPD/ERCC2, GTF2H1, GTF2H2, GTF2H3, GTF2H4 and GTF2H5, which is active in NER. The core complex associates with the 3-subunit CDK-activating kinase (CAK) module composed of CCNH/cyclin H, CDK7 and MNAT1 to form the 10-subunit holoenzyme (holo-TFIIH) active in transcription. Interacts with PUF60. Interacts with ATF7IP. Interacts with KAT2A; leading to KAT2A recruitment to promoters and acetylation of histones. Part of TBP-based Pol II pre-initiation complex (PIC), in which Pol II core assembles with general transcription factors and other specific initiation factors including GTF2E1, GTF2E2, GTF2F1, GTF2F2, TCEA1, ERCC2, ERCC3, GTF2H2, GTF2H3, GTF2H4, GTF2H5, GTF2A1, GTF2A2, GTF2B and TBP; this large multi-subunit PIC complex mediates DNA unwinding and targets Pol II core to the transcription start site where the first phosphodiester bond forms. Post-translationally, phosphorylation on Ser-751 by CK2 controls the 5'-excision activity of ERCC1-XPF endonuclease; phosphorylated protein inhibits the excision activity and thus NER. Dephosphorylation reactivates the 5'-excision step. Phosphorylation has no effect on transcription or the 3'-5' helicase activity.

It is found in the nucleus. It carries out the reaction Couples ATP hydrolysis with the unwinding of duplex DNA by translocating in the 3'-5' direction.. The catalysed reaction is ATP + H2O = ADP + phosphate + H(+). Phosphorylation on Ser-751 by CK2 controls the 5'-excision activity of ERCC1-XPF endonuclease; phosphorylated protein inhibits the excision activity and thus NER. ATPase activity is stimulated by TFIIH subunit p52 (GTF2H4). DNA translocase activity by this subunit in TFIIH is stimulated by XPA, ERCC5/XPG and XFP plus ERCC1. In terms of biological role, ATP-dependent 3'-5' DNA helicase/translocase; binds dsDNA rather than ssDNA, unzipping it in a translocase rather than classical helicase activity. Component of the general transcription and DNA repair factor IIH (TFIIH) core complex. When complexed to CDK-activating kinase (CAK), involved in RNA transcription by RNA polymerase II. The ATPase activity of XPB/ERCC3, but not its helicase activity, is required for DNA opening; it may wrap around the damaged DNA wedging it open, causing localized melting and twisting that allows XPD/ERCC2 helicase to anchor. The ATP-dependent helicase activity of XPB/ERCC3 may be required for promoter escape. Also involved in transcription-coupled nucleotide excision repair (NER) of damaged DNA. In NER, TFIIH acts by opening DNA around the lesion to allow the excision of the damaged oligonucleotide and its replacement by a new DNA fragment. The structure of the TFIIH transcription complex differs from the NER-TFIIH complex; large movements by XPD/ERCC2 and XPB/ERCC3 are stabilized by XPA. The polypeptide is General transcription and DNA repair factor IIH helicase/translocase subunit XPB (ERCC3) (Macaca fascicularis (Crab-eating macaque)).